The primary structure comprises 356 residues: UDP-N-acetylglucosamine--N-acetylmuramyl-(pentapeptide) pyrophosphoryl-undecaprenol N-acetylglucosamine transferase (356 aa).

UDP-N-acetyl-alpha-D-glucosamine contacts are provided by Arg-166, Ser-196, and Gln-290.

Belongs to the glycosyltransferase 28 family. MurG subfamily.

It localises to the cell membrane. It carries out the reaction Mur2Ac(oyl-L-Ala-gamma-D-Glu-L-Lys-D-Ala-D-Ala)-di-trans,octa-cis-undecaprenyl diphosphate + UDP-N-acetyl-alpha-D-glucosamine = beta-D-GlcNAc-(1-&gt;4)-Mur2Ac(oyl-L-Ala-gamma-D-Glu-L-Lys-D-Ala-D-Ala)-di-trans,octa-cis-undecaprenyl diphosphate + UDP + H(+). It functions in the pathway cell wall biogenesis; peptidoglycan biosynthesis. Its function is as follows. Cell wall formation. Catalyzes the transfer of a GlcNAc subunit on undecaprenyl-pyrophosphoryl-MurNAc-pentapeptide (lipid intermediate I) to form undecaprenyl-pyrophosphoryl-MurNAc-(pentapeptide)GlcNAc (lipid intermediate II). The sequence is that of UDP-N-acetylglucosamine--N-acetylmuramyl-(pentapeptide) pyrophosphoryl-undecaprenol N-acetylglucosamine transferase from Staphylococcus aureus (strain MRSA252).